The primary structure comprises 397 residues: Nickel-cobalt-cadmium resistance protein NccB (397 aa).

Residues 10-30 traverse the membrane as a helical segment; sequence PSWPMIAGVAAAAALVGFGAA. Residues 137–195 adopt a coiled-coil conformation; sequence EAAAMAAERKVAQARADLARKTYERESSLFQQGVTPRQEMESARIALDVAQAEVQRAAT.

It belongs to the membrane fusion protein (MFP) (TC 8.A.1) family.

It is found in the cell inner membrane. In terms of biological role, component of the NCC cation efflux system that confers resistance to nickel, cobalt and cadmium. The sequence is that of Nickel-cobalt-cadmium resistance protein NccB (nccB) from Alcaligenes xylosoxydans xylosoxydans (Achromobacter xylosoxidans).